The sequence spans 191 residues: Large ribosomal subunit protein bL9 (191 aa).

The tract at residues 149-191 is disordered; sequence EEAERQSKGESLTSADAIYGVDEDALRPEDFFDPEADGNEDDE. Positions 179–191 are enriched in acidic residues; the sequence is FFDPEADGNEDDE.

This sequence belongs to the bacterial ribosomal protein bL9 family.

Its function is as follows. Binds to the 23S rRNA. The sequence is that of Large ribosomal subunit protein bL9 (rplI) from Agrobacterium fabrum (strain C58 / ATCC 33970) (Agrobacterium tumefaciens (strain C58)).